The primary structure comprises 404 residues: MTSLSVFRDVPTAQKLEGSLLKIYRQDGYPSKLFLAYKVCMTEEGHPWVSLVVHKTRLQIAEDPSLDYEYLPLVGLKSFIQSSLELLFGKHSEAIAEKRVGGVHIVGESGAFQLGAQFLKTWRKNVKIVCIVSCQKEQCGLIFQDMGFIVYEYSIWNASDLCSDPSMFVEVLQHIPVGSILVIGNITDCKFTQNQWTKLMSIIKSKQIFPFFDIPCQGLSTGDLEEDTKILQYFVSLGLEFFCSQSLSKNFGIYDEGVGILVVAALSNQHLLCVLSQLMDYVQALWGNPPATGARIITSILCNPALFGEWKQSLKGVVENMMLIKEKVKEKLRLLGTPGSWDHITRQSGTHGYLGLTYQQVEFLVKKKHIYLPKTSRINFTCINARNIDYITQSIHEAVMLTEG.

Residue Lys249 is modified to N6-(pyridoxal phosphate)lysine.

It belongs to the class-I pyridoxal-phosphate-dependent aminotransferase family. In terms of assembly, homodimer. Pyridoxal 5'-phosphate is required as a cofactor.

It localises to the cytoplasm. The catalysed reaction is L-aspartate + 2-oxoglutarate = oxaloacetate + L-glutamate. This Mus musculus (Mouse) protein is Putative aspartate aminotransferase, cytoplasmic 2 (Got1l1).